The following is a 172-amino-acid chain: Trypsin inhibitor 1A (172 aa).

Intrachain disulfides connect cysteine 40–cysteine 84 and cysteine 133–cysteine 139.

It belongs to the protease inhibitor I3 (leguminous Kunitz-type inhibitor) family.

In terms of biological role, WTI-1B inhibits trypsin stoichiometrically. The protein is Trypsin inhibitor 1A of Psophocarpus tetragonolobus (Winged bean).